A 464-amino-acid polypeptide reads, in one-letter code: Asparagine--tRNA ligase (464 aa).

This sequence belongs to the class-II aminoacyl-tRNA synthetase family. Homodimer.

The protein resides in the cytoplasm. It carries out the reaction tRNA(Asn) + L-asparagine + ATP = L-asparaginyl-tRNA(Asn) + AMP + diphosphate + H(+). This Clostridium beijerinckii (strain ATCC 51743 / NCIMB 8052) (Clostridium acetobutylicum) protein is Asparagine--tRNA ligase.